The chain runs to 168 residues: Small ribosomal subunit protein bS6 (168 aa).

The segment at 103–168 is disordered; that stretch reads RQAIAEEKEK…AAADKSDDNA (66 aa). Residues 106 to 115 show a composition bias toward basic and acidic residues; the sequence is IAEEKEKKAE. The segment covering 116–125 has biased composition (low complexity); it reads GQAAADAAPA.

This sequence belongs to the bacterial ribosomal protein bS6 family.

In terms of biological role, binds together with bS18 to 16S ribosomal RNA. This chain is Small ribosomal subunit protein bS6, found in Desulfosudis oleivorans (strain DSM 6200 / JCM 39069 / Hxd3) (Desulfococcus oleovorans).